A 597-amino-acid chain; its full sequence is Probable serine/threonine-protein kinase DDB_G0281745 (597 aa).

Residues 49 to 61 (TIDNSNGKQSTTP) show a composition bias toward polar residues. A disordered region spans residues 49–320 (TIDNSNGKQS…RNNESTATTA (272 aa)). Residues 72–97 (QPPPQQSQQQPPQPLKPIPATRPVPT) show a composition bias toward pro residues. Residues 114–140 (TLPTTNSSTKYSTLPSRQFFEVSSSPG) show a composition bias toward polar residues. Residues 157 to 168 (SLSSNQNGSNLN) show a composition bias toward low complexity. The span at 208-234 (PSPPSPPLQSPQPTPQQQPPPLKPIPQ) shows a compositional bias: pro residues. Low complexity predominate over residues 235–264 (PQQQQQQQQQQQQQQQQQQQQQQQQQQQQQ). The span at 265–274 (QPPPLKPIPQ) shows a compositional bias: pro residues. Low complexity predominate over residues 275–301 (PQQSQPTQPIKSQIQIPITNTNGNTNG). The Protein kinase domain occupies 334-585 (KFVGNEIGSG…KVLDTIQNIY (252 aa)). ATP is bound by residues 340–348 (IGSGKYGSV) and K361. D454 functions as the Proton acceptor in the catalytic mechanism.

The protein belongs to the protein kinase superfamily. TKL Ser/Thr protein kinase family.

The enzyme catalyses L-seryl-[protein] + ATP = O-phospho-L-seryl-[protein] + ADP + H(+). It carries out the reaction L-threonyl-[protein] + ATP = O-phospho-L-threonyl-[protein] + ADP + H(+). This chain is Probable serine/threonine-protein kinase DDB_G0281745, found in Dictyostelium discoideum (Social amoeba).